A 325-amino-acid chain; its full sequence is Phage-like element PBSX protein XkdQ (325 aa).

To B.subtilis YqbQ.

The sequence is that of Phage-like element PBSX protein XkdQ (xkdQ) from Bacillus subtilis (strain 168).